Consider the following 349-residue polypeptide: Protein RecA (349 aa).

65–72 contributes to the ATP binding site; that stretch reads GPESSGKT.

This sequence belongs to the RecA family.

The protein resides in the cytoplasm. Its function is as follows. Can catalyze the hydrolysis of ATP in the presence of single-stranded DNA, the ATP-dependent uptake of single-stranded DNA by duplex DNA, and the ATP-dependent hybridization of homologous single-stranded DNAs. It interacts with LexA causing its activation and leading to its autocatalytic cleavage. The sequence is that of Protein RecA from Aliarcobacter butzleri (strain RM4018) (Arcobacter butzleri).